A 360-amino-acid polypeptide reads, in one-letter code: Dihydroorotate dehydrogenase (quinone) (360 aa).

FMN contacts are provided by residues 66–70 (AGFDK) and T90. Substrate is bound at residue K70. Residue 115-119 (NRMGF) participates in substrate binding. Residues N143 and N176 each coordinate FMN. N176 contacts substrate. S179 acts as the Nucleophile in catalysis. N181 contributes to the substrate binding site. FMN contacts are provided by K212 and T240. 241–242 (NT) provides a ligand contact to substrate. Residues G264, G293, and 314–315 (YT) each bind FMN.

The protein belongs to the dihydroorotate dehydrogenase family. Type 2 subfamily. Monomer. FMN serves as cofactor.

It localises to the cell membrane. The enzyme catalyses (S)-dihydroorotate + a quinone = orotate + a quinol. It functions in the pathway pyrimidine metabolism; UMP biosynthesis via de novo pathway; orotate from (S)-dihydroorotate (quinone route): step 1/1. In terms of biological role, catalyzes the conversion of dihydroorotate to orotate with quinone as electron acceptor. The sequence is that of Dihydroorotate dehydrogenase (quinone) from Mycobacterium ulcerans (strain Agy99).